The following is a 466-amino-acid chain: Histidine--tRNA ligase (466 aa).

The protein belongs to the class-II aminoacyl-tRNA synthetase family. As to quaternary structure, homodimer.

The protein resides in the cytoplasm. The enzyme catalyses tRNA(His) + L-histidine + ATP = L-histidyl-tRNA(His) + AMP + diphosphate + H(+). In Xylella fastidiosa (strain M23), this protein is Histidine--tRNA ligase.